Consider the following 1212-residue polypeptide: Metabotropic glutamate receptor 5 (1212 aa).

The N-terminal stretch at methionine 1–alanine 20 is a signal peptide. Topologically, residues serine 22–proline 580 are extracellular. Cysteine 57 and cysteine 99 are joined by a disulfide. Tyrosine 64 contributes to the L-glutamate binding site. Asparagine 88 carries N-linked (GlcNAc...) asparagine glycosylation. Residues serine 152 and serine 173 to threonine 175 each bind L-glutamate. N-linked (GlcNAc...) asparagine glycosylation occurs at asparagine 210. Tyrosine 223 contributes to the L-glutamate binding site. 8 disulfide bridges follow: cysteine 241/cysteine 530, cysteine 276/cysteine 278, cysteine 365/cysteine 381, cysteine 419/cysteine 426, cysteine 511/cysteine 531, cysteine 515/cysteine 534, cysteine 537/cysteine 549, and cysteine 552/cysteine 565. Aspartate 305 is a binding site for L-glutamate. Asparagine 378 and asparagine 382 each carry an N-linked (GlcNAc...) asparagine glycan. Lysine 396 contacts L-glutamate. An N-linked (GlcNAc...) asparagine glycan is attached at asparagine 445. Residues isoleucine 581–isoleucine 603 traverse the membrane as a helical segment. Residues tyrosine 604–serine 613 are Cytoplasmic-facing. The chain crosses the membrane as a helical span at residues serine 614 to isoleucine 636. Residues alanine 637 to cysteine 644 are Extracellular-facing. Cysteine 644 and cysteine 733 are disulfide-bonded. A helical transmembrane segment spans residues tyrosine 645–asparagine 667. Topologically, residues arginine 668–glutamine 693 are cytoplasmic. The chain crosses the membrane as a helical span at residues leucine 694 to methionine 714. The Extracellular portion of the chain corresponds to glutamate 715–asparagine 737. N-linked (GlcNAc...) asparagine glycosylation is present at asparagine 734. The chain crosses the membrane as a helical span at residues leucine 738–phenylalanine 759. The Cytoplasmic segment spans residues lysine 760 to lysine 772. The chain crosses the membrane as a helical span at residues tyrosine 773 to serine 795. Over asparagine 796–lysine 798 the chain is Extracellular. The chain crosses the membrane as a helical span at residues isoleucine 799–proline 820. Residues lysine 821–leucine 1212 are Cytoplasmic-facing. Serine 861 carries the post-translational modification Phosphoserine. Residues arginine 869 and arginine 925 each carry the omega-N-methylarginine modification. Disordered regions lie at residues isoleucine 937–alanine 971, phenylalanine 1010–serine 1056, and glycine 1132–isoleucine 1191. Positions leucine 961–alanine 971 are enriched in gly residues. Residues serine 1018 and serine 1020 each carry the phosphoserine modification. Residues glycine 1132–alanine 1153 show a composition bias toward low complexity. A compositionally biased stretch (polar residues) spans aspartate 1174–serine 1185.

The protein belongs to the G-protein coupled receptor 3 family. As to quaternary structure, the PPXXF motif binds HOMER1, HOMER2 and HOMER3. Interacts with SIAH1, RYR1, RYR2, ITPR1, SHANK1, SHANK3 and TAMALIN. Interacts with NCDN. Isoform 2 interacts with NECAB2. Interacts with CAMK2A.

The protein resides in the cell membrane. Its function is as follows. G-protein coupled receptor for glutamate. Ligand binding causes a conformation change that triggers signaling via guanine nucleotide-binding proteins (G proteins) and modulates the activity of down-stream effectors. Signaling activates a phosphatidylinositol-calcium second messenger system and generates a calcium-activated chloride current. Plays an important role in the regulation of synaptic plasticity and the modulation of the neural network activity. The chain is Metabotropic glutamate receptor 5 (GRM5) from Homo sapiens (Human).